The following is a 427-amino-acid chain: MSNNQILFERAQKTIPGGVNSPVRAFRSVGGTPRFVARAQGPYFWDADGKQYIDYIGSWGPMIVGHVHPEVLSAVQNVLADGFSFGAPTEAEIEIAEEICKLVPSIEQVRMVSSGTEATMSALRLARGFTGRSRIVKFEGCYHGHADSLLVKAGSGLLTFGNPTSAGVPADIAKHTTVLEYNNVAALEEAFGAFGDEIAAVIVEPVAGNMNLVRGTPEFLNALRALCTKHGAVLIFDEVMCGFRVALGGAQAYYGIAADLTCLGKVIGGGMPAAAFGGRRDIMAHLAPLGGVYQAGTLSGNPIAVAAGLKTLQLIQAPGFYDALTAQTKRLTDGLAAEARAAGVPFAADSIGAMFGLYFAERVPTSFAEVTKSDIARFNRFFHLMLDEGVYFAPSAYEAGFVSSTHDDAVIDATLAAARRAFAALAA.

The residue at position 265 (Lys-265) is an N6-(pyridoxal phosphate)lysine.

It belongs to the class-III pyridoxal-phosphate-dependent aminotransferase family. HemL subfamily. As to quaternary structure, homodimer. Pyridoxal 5'-phosphate is required as a cofactor.

The protein resides in the cytoplasm. The enzyme catalyses (S)-4-amino-5-oxopentanoate = 5-aminolevulinate. It functions in the pathway porphyrin-containing compound metabolism; protoporphyrin-IX biosynthesis; 5-aminolevulinate from L-glutamyl-tRNA(Glu): step 2/2. The polypeptide is Glutamate-1-semialdehyde 2,1-aminomutase (Burkholderia cenocepacia (strain ATCC BAA-245 / DSM 16553 / LMG 16656 / NCTC 13227 / J2315 / CF5610) (Burkholderia cepacia (strain J2315))).